An 85-amino-acid polypeptide reads, in one-letter code: Small ribosomal subunit protein uS15 (85 aa).

Belongs to the universal ribosomal protein uS15 family. Part of the 30S ribosomal subunit. Forms a bridge to the 50S subunit in the 70S ribosome, contacting the 23S rRNA.

One of the primary rRNA binding proteins, it binds directly to 16S rRNA where it helps nucleate assembly of the platform of the 30S subunit by binding and bridging several RNA helices of the 16S rRNA. Its function is as follows. Forms an intersubunit bridge (bridge B4) with the 23S rRNA of the 50S subunit in the ribosome. The polypeptide is Small ribosomal subunit protein uS15 (Fusobacterium nucleatum subsp. nucleatum (strain ATCC 25586 / DSM 15643 / BCRC 10681 / CIP 101130 / JCM 8532 / KCTC 2640 / LMG 13131 / VPI 4355)).